A 742-amino-acid chain; its full sequence is UPF0313 protein MA_4618 (742 aa).

A disordered region spans residues 1–125 (MGVRKQTMVK…SFSSSLPASK (125 aa)). Residues 1–128 (MGVRKQTMVK…SSLPASKFLP (128 aa)) form a unknown region. 2 stretches are compositionally biased toward basic and acidic residues: residues 17–40 (ENKK…ERAG) and 49–73 (KKVE…KAEG). Residues 106–115 (TGKKEKKQKK) are compositionally biased toward basic residues. Residues 129-742 (MSPEEVKARG…KCLIRRKEKQ (614 aa)) are UPF0313. One can recognise a Radical SAM core domain in the interval 438–707 (ALEMVKFSLT…AMQRALMHYR (270 aa)). Positions 452, 456, and 459 each coordinate [4Fe-4S] cluster.

The protein in the C-terminal section; belongs to the UPF0313 family. [4Fe-4S] cluster is required as a cofactor.

The polypeptide is UPF0313 protein MA_4618 (Methanosarcina acetivorans (strain ATCC 35395 / DSM 2834 / JCM 12185 / C2A)).